The chain runs to 142 residues: Putative transmembrane protein INAFM1 (142 aa).

The segment covering 1-19 (MRGTSCVGGGAESPGGAGL) has biased composition (gly residues). The interval 1–22 (MRGTSCVGGGAESPGGAGLSEG) is disordered. The chain crosses the membrane as a helical span at residues 36 to 56 (YFLCVSLAAVLLAVYYGLIWV). Disordered stretches follow at residues 61–83 (PAAP…PGVP) and 99–142 (VPGG…RRPG). Pro residues predominate over residues 64–83 (PAGPQPSAPSPPCAARPGVP). The span at 99–111 (VPGGPRPQLQLPL) shows a compositional bias: low complexity. Residues 117-142 (YSDPDRRPSRQTPRETPEAAEGRRPG) are compositionally biased toward basic and acidic residues.

Its subcellular location is the membrane. This chain is Putative transmembrane protein INAFM1, found in Homo sapiens (Human).